The chain runs to 200 residues: Large ribosomal subunit protein uL4 (200 aa).

The disordered stretch occupies residues 42-65 (TRAQKTRSEVSGGGAKPWRQKGTG).

This sequence belongs to the universal ribosomal protein uL4 family. Part of the 50S ribosomal subunit.

In terms of biological role, one of the primary rRNA binding proteins, this protein initially binds near the 5'-end of the 23S rRNA. It is important during the early stages of 50S assembly. It makes multiple contacts with different domains of the 23S rRNA in the assembled 50S subunit and ribosome. Its function is as follows. Forms part of the polypeptide exit tunnel. The sequence is that of Large ribosomal subunit protein uL4 from Vibrio campbellii (strain ATCC BAA-1116).